We begin with the raw amino-acid sequence, 408 residues long: Bone morphogenetic protein 4 (408 aa).

An N-terminal signal peptide occupies residues 1–19 (MIPGNRMLMVVLLCQVLLG). The propeptide occupies 20–292 (GATDASLIPE…HTLTRRRAKR (273 aa)). Ser91 carries the post-translational modification Phosphoserine. The disordered stretch occupies residues 91 to 113 (SGEEEEEEQSQGTGLEYPERPAS). Residues Asn144 and Asn209 are each glycosylated (N-linked (GlcNAc...) asparagine). The segment at 281–307 (RGHTLTRRRAKRSPKHHPQRSRKKNKN) is disordered. Basic residues predominate over residues 284–307 (TLTRRRAKRSPKHHPQRSRKKNKN). 3 disulfide bridges follow: Cys308–Cys373, Cys337–Cys405, and Cys341–Cys407. Asn350 and Asn365 each carry an N-linked (GlcNAc...) asparagine glycan.

It belongs to the TGF-beta family. In terms of assembly, homodimer; disulfide-linked. Interacts with GREM2. Part of a complex consisting of TWSG1 and CHRD. Interacts with the serine proteases, HTRA1 and HTRA3; the interaction with either inhibits BMP4-mediated signaling. The HTRA protease activity is required for this inhibition. Interacts with SOSTDC1. Interacts with FBN1 (via N-terminal domain) and FBN2. Interacts with type I receptor BMPR1A. Interacts with type II receptor BMPR2. Interacts with FSTL1; this interaction inhibits the activation of the BMP4/Smad1/5/8 signaling pathway. Interacts with SCUBE3. Interacts with TGFBR3.

Its subcellular location is the secreted. It is found in the extracellular space. The protein resides in the extracellular matrix. Its function is as follows. Growth factor of the TGF-beta superfamily that plays essential roles in many developmental processes, including neurogenesis, vascular development, angiogenesis and osteogenesis. Acts in concert with PTHLH/PTHRP to stimulate ductal outgrowth during embryonic mammary development and to inhibit hair follicle induction. Initiates the canonical BMP signaling cascade by associating with type I receptor BMPR1A and type II receptor BMPR2. Once all three components are bound together in a complex at the cell surface, BMPR2 phosphorylates and activates BMPR1A. In turn, BMPR1A propagates signal by phosphorylating SMAD1/5/8 that travel to the nucleus and act as activators and repressors of transcription of target genes. Positively regulates the expression of odontogenic development regulator MSX1 via inducing the IPO7-mediated import of SMAD1 to the nucleus. Required for MSX1-mediated mesenchymal molar tooth bud development beyond the bud stage, via promoting Wnt signaling. Acts as a positive regulator of odontoblast differentiation during mesenchymal tooth germ formation, expression is repressed during the bell stage by MSX1-mediated inhibition of CTNNB1 signaling. Able to induce its own expression in dental mesenchymal cells and also in the neighboring dental epithelial cells via an MSX1-mediated pathway. Can also signal through non-canonical BMP pathways such as ERK/MAP kinase, PI3K/Akt, or SRC cascades. For example, induces SRC phosphorylation which, in turn, activates VEGFR2, leading to an angiogenic response. The protein is Bone morphogenetic protein 4 of Rattus norvegicus (Rat).